An 817-amino-acid polypeptide reads, in one-letter code: MRKWTVPSVLFLLCPSLSSSCQGRKIHANAEADSDAPVDPPKVEDKIGAVPNGLSTDSDVAKREAESMSMRNLRSDAEKFEFQAEVSRLMDIIINSLYSNKDIFLRELISNASDALDKIRFLALTDKEILGEGDTAKLEIQIKLDKEKKILSIRDRGIGMTKEDLIKNLGTIAKSGTSAFVEKMQTSGDLNLIGQFGVGFYSVYLVPDYVEVISKHNDDKQYIWESKADGAFAISEDVWNEPLGRGTEIRLHLRDEAQEYLDEFKLKELVKRYSEFINFPIYLWASKEVEVEVPAEEDDSSDDEDNKSESSSSEEGEEEETEKEEDEKKPKTKKVKETTYEWELLNDMKAIWLRNPKDVTDDEYTKFYHSLAKDFSEEKPLAWSHFTAEGDVEFKAFTLLPPKAPQDLYESYYNSNKSNLKLYVRRVFISDEFDELLPKYLNFLKGLVDSDTLPLNVSREMLQQHSSLKTIKKKLIRKALDMIRKIADEDPDEANDKDKKEVEESTDNDEKKGQYAKFWNEFGKSIKLGIIEDAANRNRLAKLLRFESTKSEGKLTSLDQYISRMKSGQKDIFYITGTSKEQLEKSPFLERLTKKNYEVILFTDPVDEYLMQYLMDYEDKKFQNVSKEGLKIGKDSKDKELKESFKELTKWWKGALASENVDDVKISNRLANTPCVVVTSKYGWSSNMERIMQSQTLSDASKQAYMRGKRVLEINPRHPIIKELRERVVKDAEDESVKQTARLMYQTALMESGFMLNDPKEFASSIYDSVKSSLKISPDATVEEEDDTEEAEAESGTTESSAAEDAGAETLDLKDEL.

Residues 1 to 20 form the signal peptide; the sequence is MRKWTVPSVLFLLCPSLSSS. The disordered stretch occupies residues 31-58; it reads EADSDAPVDPPKVEDKIGAVPNGLSTDS. Positions 111, 155, 168, and 200 each coordinate ATP. Asn111 is a glycosylation site (N-linked (GlcNAc...) asparagine). Residues 293–325 show a composition bias toward acidic residues; that stretch reads VPAEEDDSSDDEDNKSESSSSEEGEEEETEKEE. The disordered stretch occupies residues 293 to 333; that stretch reads VPAEEDDSSDDEDNKSESSSSEEGEEEETEKEEDEKKPKTK. N-linked (GlcNAc...) asparagine glycosylation is found at Asn306, Asn416, Asn456, and Asn624. The tract at residues 777–817 is disordered; the sequence is SPDATVEEEDDTEEAEAESGTTESSAAEDAGAETLDLKDEL. Positions 781–793 are enriched in acidic residues; it reads TVEEEDDTEEAEA. Residues 794–805 are compositionally biased toward low complexity; it reads ESGTTESSAAED. Residues 814 to 817 carry the Prevents secretion from ER motif; the sequence is KDEL.

The protein belongs to the heat shock protein 90 family. Not detected in extracts from young plants unless they are exposed to heat shock for several hours. Found to be constitutively expressed in cell cultures.

Its subcellular location is the endoplasmic reticulum lumen. Its function is as follows. May have a molecular chaperone role in the processing of secreted materials. This chain is Endoplasmin homolog (HSP90), found in Catharanthus roseus (Madagascar periwinkle).